Reading from the N-terminus, the 122-residue chain is Large ribosomal subunit protein bL12 (122 aa).

The protein belongs to the bacterial ribosomal protein bL12 family. Homodimer. Part of the ribosomal stalk of the 50S ribosomal subunit. Forms a multimeric L10(L12)X complex, where L10 forms an elongated spine to which 2 to 4 L12 dimers bind in a sequential fashion. Binds GTP-bound translation factors.

Its function is as follows. Forms part of the ribosomal stalk which helps the ribosome interact with GTP-bound translation factors. Is thus essential for accurate translation. The sequence is that of Large ribosomal subunit protein bL12 from Staphylococcus epidermidis (strain ATCC 35984 / DSM 28319 / BCRC 17069 / CCUG 31568 / BM 3577 / RP62A).